The sequence spans 292 residues: Aspartate carbamoyltransferase catalytic subunit (292 aa).

Residues R50 and T51 each contribute to the carbamoyl phosphate site. K78 contributes to the L-aspartate binding site. R100, H128, and Q131 together coordinate carbamoyl phosphate. 2 residues coordinate L-aspartate: R161 and R211. Residues G250 and P251 each coordinate carbamoyl phosphate.

The protein belongs to the aspartate/ornithine carbamoyltransferase superfamily. ATCase family. As to quaternary structure, heterododecamer (2C3:3R2) of six catalytic PyrB chains organized as two trimers (C3), and six regulatory PyrI chains organized as three dimers (R2).

It catalyses the reaction carbamoyl phosphate + L-aspartate = N-carbamoyl-L-aspartate + phosphate + H(+). It functions in the pathway pyrimidine metabolism; UMP biosynthesis via de novo pathway; (S)-dihydroorotate from bicarbonate: step 2/3. Catalyzes the condensation of carbamoyl phosphate and aspartate to form carbamoyl aspartate and inorganic phosphate, the committed step in the de novo pyrimidine nucleotide biosynthesis pathway. The sequence is that of Aspartate carbamoyltransferase catalytic subunit from Nitratiruptor sp. (strain SB155-2).